The chain runs to 122 residues: Large ribosomal subunit protein uL14c (122 aa).

The protein belongs to the universal ribosomal protein uL14 family. In terms of assembly, part of the 50S ribosomal subunit.

It is found in the plastid. The protein resides in the chloroplast. Its function is as follows. Binds to 23S rRNA. This chain is Large ribosomal subunit protein uL14c, found in Phalaenopsis aphrodite subsp. formosana (Moth orchid).